The primary structure comprises 185 residues: Peptidyl-tRNA hydrolase (185 aa).

Tyr-14 provides a ligand contact to tRNA. Residue His-19 is the Proton acceptor of the active site. TRNA-binding residues include Phe-64, Asn-66, and Asn-112.

This sequence belongs to the PTH family. Monomer.

The protein resides in the cytoplasm. The enzyme catalyses an N-acyl-L-alpha-aminoacyl-tRNA + H2O = an N-acyl-L-amino acid + a tRNA + H(+). Its function is as follows. Hydrolyzes ribosome-free peptidyl-tRNAs (with 1 or more amino acids incorporated), which drop off the ribosome during protein synthesis, or as a result of ribosome stalling. In terms of biological role, catalyzes the release of premature peptidyl moieties from peptidyl-tRNA molecules trapped in stalled 50S ribosomal subunits, and thus maintains levels of free tRNAs and 50S ribosomes. The protein is Peptidyl-tRNA hydrolase of Lacticaseibacillus casei (strain BL23) (Lactobacillus casei).